The chain runs to 891 residues: Nitrate reductase [NAD(P)H] (891 aa).

The interval 1–78 (MAASVEYNRQ…VKDPRDEATS (78 aa)) is disordered. Residues 63–76 (LDVEPSVKDPRDEA) are compositionally biased toward basic and acidic residues. Residue C168 participates in Mo-molybdopterin binding. Positions 515–590 (SAQFTMSEVR…LEMYRVGELI (76 aa)) constitute a Cytochrome b5 heme-binding domain. Heme is bound by residues H550 and H573. One can recognise an FAD-binding FR-type domain in the interval 630-742 (REKVRCRLVD…KGPVGHIEYA (113 aa)). FAD contacts are provided by residues 682 to 685 (RAYT), 699 to 703 (LIKIY), F704, F711, 716 to 718 (LMS), and T769.

Belongs to the nitrate reductase family. As to quaternary structure, homodimer. FAD is required as a cofactor. Requires heme as cofactor. Mo-molybdopterin serves as cofactor.

The catalysed reaction is nitrite + NAD(+) + H2O = nitrate + NADH + H(+). The enzyme catalyses nitrite + NADP(+) + H2O = nitrate + NADPH + H(+). Functionally, nitrate reductase is a key enzyme involved in the first step of nitrate assimilation in plants, fungi and bacteria. This Hordeum vulgare (Barley) protein is Nitrate reductase [NAD(P)H] (NAR-7).